The following is a 200-amino-acid chain: Recombination protein RecR (200 aa).

The C4-type zinc finger occupies 57 to 72 (CRQCRTLTEQELCPQC). Residues 80-175 (TQLCVVEGPT…VASRIAHGVP (96 aa)) enclose the Toprim domain.

Belongs to the RecR family.

Functionally, may play a role in DNA repair. It seems to be involved in an RecBC-independent recombinational process of DNA repair. It may act with RecF and RecO. In Pseudomonas putida (strain ATCC 700007 / DSM 6899 / JCM 31910 / BCRC 17059 / LMG 24140 / F1), this protein is Recombination protein RecR.